Consider the following 158-residue polypeptide: NADH-quinone oxidoreductase subunit B (158 aa).

Cysteine 37, cysteine 38, cysteine 102, and cysteine 132 together coordinate [4Fe-4S] cluster.

The protein belongs to the complex I 20 kDa subunit family. NDH-1 is composed of 14 different subunits. Subunits NuoB, C, D, E, F, and G constitute the peripheral sector of the complex. The cofactor is [4Fe-4S] cluster.

The protein localises to the cell inner membrane. It catalyses the reaction a quinone + NADH + 5 H(+)(in) = a quinol + NAD(+) + 4 H(+)(out). Functionally, NDH-1 shuttles electrons from NADH, via FMN and iron-sulfur (Fe-S) centers, to quinones in the respiratory chain. Couples the redox reaction to proton translocation (for every two electrons transferred, four hydrogen ions are translocated across the cytoplasmic membrane), and thus conserves the redox energy in a proton gradient. This is NADH-quinone oxidoreductase subunit B from Bordetella parapertussis (strain 12822 / ATCC BAA-587 / NCTC 13253).